The following is a 354-amino-acid chain: MHELLRKWLDDTNVLLLDNGLVVKVRSRVPHIRTYEVIGKLSVFDNSLGDDTLFEGKVENVFVFMFRRFLCVNKDGHCYSRKHDELYYYGRVDLDSVSKVTSGYEKLFIHRELYILTDLIERVSKFFNLAQDVVEASFEYAKVEERLGHVRNVLQLAGGKSTNADLTIKISDDVEQLLGKRGGFLKVVNGILSKNGSDVVTNDNELIHAINQNLVPDKVMSVSNVMKETGFLQFPKFLSKLEGQVPKGTKFLDKHVPDFTWIQALEERVNIRRGESGLQTLLADIVPRNAIAAQKLTMLGYIEYHDYVVIVCQSGVFSDDWATCRMLWAALSSAQLYTYVDASRIGPIVYGWLL.

As to quaternary structure, interacts with capsid protein; this interaction may play a role in vector transmission of the virus.

In terms of biological role, involved in transmission of the virus by the vector nematode Paratrichodorus pachydermus. The polypeptide is 40 kDa protein (Bidens pilosa (Hairy beggarticks)).